The chain runs to 311 residues: Formimidoylglutamase (311 aa).

His130, Asp155, His157, Asp159, Cys242, and Asp244 together coordinate Mn(2+).

It belongs to the arginase family. Mn(2+) is required as a cofactor.

The catalysed reaction is N-formimidoyl-L-glutamate + H2O = formamide + L-glutamate. The protein operates within amino-acid degradation; L-histidine degradation into L-glutamate; L-glutamate from N-formimidoyl-L-glutamate (hydrolase route): step 1/1. Functionally, catalyzes the conversion of N-formimidoyl-L-glutamate to L-glutamate and formamide. This is Formimidoylglutamase from Staphylococcus aureus (strain Mu3 / ATCC 700698).